A 272-amino-acid chain; its full sequence is MADS-box transcription factor 58 (272 aa).

The tract at residues Met-1–Lys-41 is disordered. A compositionally biased stretch (gly residues) spans Gly-27–Ser-36. One can recognise an MADS-box domain in the interval Gly-43–Ser-103. Positions Ala-129–Gly-219 constitute a K-box domain.

Expressed in the lodicule, stamen carpel and ovule primordia.

It is found in the nucleus. Its function is as follows. Probable transcription factor involved in the development of floral organs. Acts as a C-class protein in association with MADS3. Involved in the control of lodicule number (whorl 2), stamen specification (whorl 3), floral meristem determinacy and regulation of the carpel morphogenesis (whorl 4). Plays a more predominant role in floral meristem determinacy than MADS3. In Oryza sativa subsp. japonica (Rice), this protein is MADS-box transcription factor 58 (MADS58).